Here is a 264-residue protein sequence, read N- to C-terminus: 3-methyl-2-oxobutanoate hydroxymethyltransferase (264 aa).

Mg(2+)-binding residues include Asp46 and Asp85. Residues 46-47, Asp85, and Lys113 each bind 3-methyl-2-oxobutanoate; that span reads DS. Glu115 contributes to the Mg(2+) binding site. Glu181 serves as the catalytic Proton acceptor.

The protein belongs to the PanB family. Homodecamer; pentamer of dimers. Requires Mg(2+) as cofactor.

Its subcellular location is the cytoplasm. It carries out the reaction 3-methyl-2-oxobutanoate + (6R)-5,10-methylene-5,6,7,8-tetrahydrofolate + H2O = 2-dehydropantoate + (6S)-5,6,7,8-tetrahydrofolate. It participates in cofactor biosynthesis; (R)-pantothenate biosynthesis; (R)-pantoate from 3-methyl-2-oxobutanoate: step 1/2. Catalyzes the reversible reaction in which hydroxymethyl group from 5,10-methylenetetrahydrofolate is transferred onto alpha-ketoisovalerate to form ketopantoate. In Salmonella typhi, this protein is 3-methyl-2-oxobutanoate hydroxymethyltransferase.